Here is a 349-residue protein sequence, read N- to C-terminus: DNA repair protein XRCC3 (349 aa).

Met1 is modified (N-acetylmethionine). An ATP-binding site is contributed by Gly107–Thr114.

Belongs to the RecA family. RAD51 subfamily. In terms of assembly, interacts with RAD51C and RAD51. Part of the CX3 complex consisting of RAD51C and XRCC3; the complex has a ring-like structure arranged into a flat disc around a central channel; CX3 can interact with RAD51 in vitro. Forms a complex with FANCD2, BRCA2 and phosphorylated FANCG. Interacts with SWSAP1 and ZSWIM7; involved in homologous recombination repair. Interacts directly with PALB2 which may serve as a scaffold for a HR complex containing PALB2, BRCA2, RAD51C, RAD51 and XRCC3.

It localises to the nucleus. The protein localises to the cytoplasm. It is found in the perinuclear region. Its subcellular location is the mitochondrion matrix. In terms of biological role, involved in the homologous recombination repair (HRR) pathway of double-stranded DNA, thought to repair chromosomal fragmentation, translocations and deletions. Part of the RAD21 paralog protein complex CX3 which acts in the BRCA1-BRCA2-dependent HR pathway. Upon DNA damage, CX3 acts downstream of RAD51 recruitment; the complex binds predominantly to the intersection of the four duplex arms of the Holliday junction (HJ) and to junctions of replication forks. Involved in HJ resolution and thus in processing HR intermediates late in the DNA repair process; the function may be linked to the CX3 complex and seems to involve GEN1 during mitotic cell cycle progression. Part of a PALB2-scaffolded HR complex containing BRCA2 and RAD51C and which is thought to play a role in DNA repair by HR. Plays a role in regulating mitochondrial DNA copy number under conditions of oxidative stress in the presence of RAD51 and RAD51C. In Mus musculus (Mouse), this protein is DNA repair protein XRCC3 (Xrcc3).